The chain runs to 392 residues: Formate-dependent phosphoribosylglycinamide formyltransferase (392 aa).

N(1)-(5-phospho-beta-D-ribosyl)glycinamide is bound by residues 22–23 (EL) and Glu-82. Residues Arg-114, Lys-155, 160-165 (SSGKGQ), 195-198 (EKII), and Glu-203 each bind ATP. The ATP-grasp domain maps to 119–308 (VLVSKKLNIL…EFALHVRSFL (190 aa)). Mg(2+) contacts are provided by Glu-267 and Glu-279. N(1)-(5-phospho-beta-D-ribosyl)glycinamide contacts are provided by residues Asp-286, Lys-355, and 362 to 363 (RR).

This sequence belongs to the PurK/PurT family. In terms of assembly, homodimer.

The enzyme catalyses N(1)-(5-phospho-beta-D-ribosyl)glycinamide + formate + ATP = N(2)-formyl-N(1)-(5-phospho-beta-D-ribosyl)glycinamide + ADP + phosphate + H(+). It participates in purine metabolism; IMP biosynthesis via de novo pathway; N(2)-formyl-N(1)-(5-phospho-D-ribosyl)glycinamide from N(1)-(5-phospho-D-ribosyl)glycinamide (formate route): step 1/1. In terms of biological role, involved in the de novo purine biosynthesis. Catalyzes the transfer of formate to 5-phospho-ribosyl-glycinamide (GAR), producing 5-phospho-ribosyl-N-formylglycinamide (FGAR). Formate is provided by PurU via hydrolysis of 10-formyl-tetrahydrofolate. In Wigglesworthia glossinidia brevipalpis, this protein is Formate-dependent phosphoribosylglycinamide formyltransferase.